We begin with the raw amino-acid sequence, 270 residues long: Tryptophan synthase alpha chain (270 aa).

Active-site proton acceptor residues include E49 and D60.

The protein belongs to the TrpA family. As to quaternary structure, tetramer of two alpha and two beta chains.

The enzyme catalyses (1S,2R)-1-C-(indol-3-yl)glycerol 3-phosphate + L-serine = D-glyceraldehyde 3-phosphate + L-tryptophan + H2O. The protein operates within amino-acid biosynthesis; L-tryptophan biosynthesis; L-tryptophan from chorismate: step 5/5. Its function is as follows. The alpha subunit is responsible for the aldol cleavage of indoleglycerol phosphate to indole and glyceraldehyde 3-phosphate. This chain is Tryptophan synthase alpha chain, found in Buchnera aphidicola subsp. Melaphis rhois.